Consider the following 1218-residue polypeptide: Sodium bicarbonate cotransporter 3 (1218 aa).

2 disordered regions span residues 1-31 (MEAD…KTSS) and 53-99 (HVPF…SQRV). Residues 1-612 (MEADGAGEQM…DFKDALSLQC (612 aa)) lie on the Extracellular side of the membrane. Phosphoserine occurs at positions 57, 60, 89, and 155. Basic residues predominate over residues 60 to 77 (SRRRHRHRGHKHHHRRRK). The segment covering 78 to 90 (DKDSDKEDGRESP) has biased composition (basic and acidic residues). Asn-176 is a glycosylation site (N-linked (GlcNAc...) asparagine). A phosphoserine mark is found at Ser-238, Ser-247, and Arg-263. A glycan (N-linked (GlcNAc...) asparagine) is linked at Asn-274. Disordered stretches follow at residues 294 to 350 (SRAG…DIPR), 364 to 412 (KGQE…ENST), and 536 to 577 (SIRI…HAGP). A compositionally biased stretch (pro residues) spans 308 to 318 (VPTPQNSPPSS). The segment covering 319–337 (PSLSRLTSRSSQQTQPQAP) has biased composition (low complexity). The segment covering 383–396 (SPQSAPGNLDSSKS) has biased composition (polar residues). Phosphoserine occurs at positions 386, 404, and 407. The N-linked (GlcNAc...) asparagine glycan is linked to Asn-410. Ser-411 and Ser-560 each carry phosphoserine. Residues 567–576 (PPKEADHHAG) are compositionally biased toward basic and acidic residues. The helical transmembrane segment at 613–633 (LASILFLYCACMSPVITFGGL) threads the bilayer. The Cytoplasmic portion of the chain corresponds to 634 to 641 (LGEATEGR). A helical transmembrane segment spans residues 642-662 (ISAIESLFGASLTGIAYSLFA). Over 663-699 (GQPLTILGSTGPVLVFEKILFKFCRDYHLSYLSLRTS) the chain is Extracellular. The helical transmembrane segment at 700–720 (IGLWTSFLCIVLVATDASSLV) threads the bilayer. Over 721 to 729 (CYITRFTEE) the chain is Cytoplasmic. The chain crosses the membrane as a helical span at residues 730–750 (AFAALICIIFIYEALEKLFHL). Residues 751–821 (GEIYAFNMHN…MFVGSACGPH (71 aa)) lie on the Extracellular side of the membrane. A disulfide bridge links Cys-770 with Cys-772. Asn-780, Asn-790, and Asn-800 each carry an N-linked (GlcNAc...) asparagine glycan. Cys-806 and Cys-818 are disulfide-bonded. Residues 822–842 (GPYVPDVLFWCVVLFFTTFFL) traverse the membrane as a helical segment. The Cytoplasmic segment spans residues 843 to 865 (SSFLKQFKTKRYFPTKVRSTISD). A helical membrane pass occupies residues 866-886 (FAVFLTIVIMVAIDYLVGIPS). The Extracellular segment spans residues 887–912 (PKLHVPEKFEPTDPSRGWIISPLGDN). Residues 913–933 (PWWTLLIAAVPALLCTILIFM) traverse the membrane as a helical segment. At 934–958 (DQQITAVIINRKEHKLKKGAGYHLD) the chain is on the cytoplasmic side. The helical transmembrane segment at 959–979 (LLMVAVMLGVCSIMGLPWFVA) threads the bilayer. Topologically, residues 980–1015 (ATVLSISHVNSLKVESECSAPGEQPKFLGIREQRVT) are extracellular. Residues 1012-1135 (QRVTGLMIFI…MDLCFTKREL (124 aa)) form an essential for cell membrane localization and transport activity region. A helical membrane pass occupies residues 1016–1036 (GLMIFILMGLSVFMTSVLKFI). The Cytoplasmic segment spans residues 1037 to 1038 (PM). A helical transmembrane segment spans residues 1039-1059 (PVLYGVFLYMGVSSLKGIQFF). Over 1060–1096 (DRIKLFGMPAKHQPDLIYLRYVPLWKVHVFTVVQLTC) the chain is Extracellular. A phosphoserine mark is found at Met-1067 and Leu-1078. A helical transmembrane segment spans residues 1097–1117 (LVLLWVIKASAAAVVFPMMVL). The essential for interaction with RACK1 stretch occupies residues 1118-1140 (ALVFVRKLMDLCFTKRELSWLDD). The Cytoplasmic portion of the chain corresponds to 1118–1218 (ALVFVRKLMD…KKYMDAETSL (101 aa)). Residues 1138–1140 (LDD) form a CA2-binding region. A compositionally biased stretch (basic and acidic residues) spans 1148-1165 (KKEDDKKKKEKEEAERML). Residues 1148 to 1172 (KKEDDKKKKEKEEAERMLQGDGDTV) form a disordered region. A Phosphothreonine modification is found at Thr-1171. Phosphoserine occurs at positions 1180, 1188, 1201, and 1217. A PDZ-binding motif is present at residues 1215–1218 (ETSL).

Belongs to the anion exchanger (TC 2.A.31) family. As to quaternary structure, interacts with USH1C. Forms a complex with ATP6V1B1 and NHERF1/EBP50. Interacts in a pH dependent-manner with CA2/carbonic anhydrase 2. Interacts with CFTR probably through NHERF1/EBP50. In terms of assembly, interacts with RACK1. Post-translationally, undergoes lysosome-mediated degradation. In terms of processing, N-glycosylated. As to expression, expressed in aorta, ventricles, atrium, mesenteric artery, kidney, spleen, duodenum, jejunum, ileum, colon, lung, trachea, gastric fundus and pylorus, cerebrum, cerebellum, pancreas, liver, parotid gland, and epididymis. Expressed in the inner ear by cochlear outer and inner hair cells (at protein level). Highly expressed in testis and spleen. In terms of tissue distribution, specifically expressed in kidney. Specifically expressed in hippocampal neurons.

The protein resides in the basolateral cell membrane. Its subcellular location is the apical cell membrane. It localises to the cell projection. The protein localises to the stereocilium. It is found in the cell membrane. It carries out the reaction hydrogencarbonate(in) + Na(+)(in) = hydrogencarbonate(out) + Na(+)(out). Insensitive to stilbene derivatives. Its function is as follows. Electroneutral sodium- and bicarbonate-dependent cotransporter with a Na(+):HCO3(-) 1:1 stoichiometry. Mediates the sodium-dependent bicarbonate transport important for pH recovery after acid load as well as for regulation of steady-state pH in the duodenum and vascular smooth muscle cells. Plays a key role in macrophage acidification, mediating bicarbonate import into the cytoplasm which is crucial for net acid extrusion and maintenance of cytoplasmic pH during phagocytosis. Provides cellular bicarbonate for de novo purine and pyrimidine synthesis and is a key mediator of de novo nucleotide synthesis downstream of mTORC1 signaling in proliferating cells. The protein is Sodium bicarbonate cotransporter 3 (Slc4a7) of Rattus norvegicus (Rat).